A 534-amino-acid chain; its full sequence is Probable bifunctional tRNA threonylcarbamoyladenosine biosynthesis protein (534 aa).

A kae1 region spans residues 1–324 (MICLGIEGTA…YRTDQVEVTW (324 aa)). Fe cation-binding residues include histidine 108, histidine 112, and tyrosine 129. L-threonylcarbamoyladenylate-binding positions include 129–133 (YTSGG), aspartate 161, glycine 174, glutamate 178, and asparagine 258. Fe cation is bound at residue aspartate 286. A Protein kinase domain is found at 335–534 (LPDNIKEKGA…DEIEKRGRYL (200 aa)). ATP is bound by residues 340-348 (KEKGAEADI) and lysine 361. Residue aspartate 455 is the Proton acceptor; for kinase activity of the active site.

The protein in the N-terminal section; belongs to the KAE1 / TsaD family. It in the C-terminal section; belongs to the protein kinase superfamily. Tyr protein kinase family. BUD32 subfamily. As to quaternary structure, component of the KEOPS complex that consists of Kae1, Bud32, Cgi121 and Pcc1; the whole complex dimerizes. Fe(2+) serves as cofactor.

It localises to the cytoplasm. It catalyses the reaction L-seryl-[protein] + ATP = O-phospho-L-seryl-[protein] + ADP + H(+). It carries out the reaction L-threonyl-[protein] + ATP = O-phospho-L-threonyl-[protein] + ADP + H(+). The catalysed reaction is L-threonylcarbamoyladenylate + adenosine(37) in tRNA = N(6)-L-threonylcarbamoyladenosine(37) in tRNA + AMP + H(+). In terms of biological role, required for the formation of a threonylcarbamoyl group on adenosine at position 37 (t(6)A37) in tRNAs that read codons beginning with adenine. Is a component of the KEOPS complex that is probably involved in the transfer of the threonylcarbamoyl moiety of threonylcarbamoyl-AMP (TC-AMP) to the N6 group of A37. The Kae1 domain likely plays a direct catalytic role in this reaction. The Bud32 domain probably displays kinase activity that regulates Kae1 function. In Methanosphaera stadtmanae (strain ATCC 43021 / DSM 3091 / JCM 11832 / MCB-3), this protein is Probable bifunctional tRNA threonylcarbamoyladenosine biosynthesis protein.